The following is a 193-amino-acid chain: UPF0397 protein PA0141 (193 aa).

Helical transmembrane passes span 11 to 31 (VTIA…SIPI), 43 to 63 (FLVF…GLLG), 69 to 89 (FFLF…LGFL), 109 to 129 (ILFF…LIAP), and 147 to 167 (GFLV…FLMS).

It belongs to the UPF0397 family.

It localises to the cell membrane. In Phytoplasma australiense, this protein is UPF0397 protein PA0141.